The chain runs to 1017 residues: Rho-GTPase-activating protein LRG1 (1017 aa).

Met1 is modified (N-acetylmethionine). 2 LIM zinc-binding domains span residues 28–88 and 98–148; these read CARC…LCQY and CHVC…CKYH. The LIM zinc-binding 3; truncated domain occupies 155–184; the sequence is KRCKGCEFPISDQYIEFPKGEEIHCWHPEC. Residues 419–474 form the LIM zinc-binding 4 domain; sequence CAGCNKYIQEECIQFYEHRWHIACFTCSSCHKNINPRSLTDPTFNKEKKKILCSHC. Ser562 carries the phosphoserine modification. A disordered region spans residues 570–602; the sequence is TDLNDPTKQGDSKNLVIQTDDPSSSQQVSTREN. The span at 584 to 602 shows a compositional bias: polar residues; sequence LVIQTDDPSSSQQVSTREN. The region spanning 730-953 is the Rho-GAP domain; that stretch reads APLDVLCEKW…YLITHNEEMA (224 aa).

In terms of assembly, interacts with CDC42, RHO1 and RHO2.

It is found in the cytoplasm. The protein resides in the bud. Its subcellular location is the bud neck. In terms of biological role, acts in signal transduction. Activates CDC42, RHO1 and RHO2. Negatively regulates 1,3-beta-glucan synthesis. May be responsible for the down-regulation of CDC42 during mating. This chain is Rho-GTPase-activating protein LRG1 (LRG1), found in Saccharomyces cerevisiae (strain ATCC 204508 / S288c) (Baker's yeast).